The primary structure comprises 286 residues: ATP synthase gamma chain (286 aa).

It belongs to the ATPase gamma chain family. In terms of assembly, F-type ATPases have 2 components, CF(1) - the catalytic core - and CF(0) - the membrane proton channel. CF(1) has five subunits: alpha(3), beta(3), gamma(1), delta(1), epsilon(1). CF(0) has three main subunits: a, b and c.

It localises to the cell inner membrane. Produces ATP from ADP in the presence of a proton gradient across the membrane. The gamma chain is believed to be important in regulating ATPase activity and the flow of protons through the CF(0) complex. This Pseudomonas savastanoi pv. phaseolicola (strain 1448A / Race 6) (Pseudomonas syringae pv. phaseolicola (strain 1448A / Race 6)) protein is ATP synthase gamma chain.